Consider the following 338-residue polypeptide: Lipoate-protein ligase A (338 aa).

Residues 29–216 (PATQRVLFLW…AFFAHYGERV (188 aa)) enclose the BPL/LPL catalytic domain. Residues Arg-71, 76 to 79 (GAVF), and Lys-134 contribute to the ATP site. Residue Lys-134 participates in (R)-lipoate binding.

It belongs to the LplA family. In terms of assembly, monomer.

It localises to the cytoplasm. The enzyme catalyses L-lysyl-[lipoyl-carrier protein] + (R)-lipoate + ATP = N(6)-[(R)-lipoyl]-L-lysyl-[lipoyl-carrier protein] + AMP + diphosphate + H(+). The protein operates within protein modification; protein lipoylation via exogenous pathway; protein N(6)-(lipoyl)lysine from lipoate: step 1/2. It participates in protein modification; protein lipoylation via exogenous pathway; protein N(6)-(lipoyl)lysine from lipoate: step 2/2. Catalyzes both the ATP-dependent activation of exogenously supplied lipoate to lipoyl-AMP and the transfer of the activated lipoyl onto the lipoyl domains of lipoate-dependent enzymes. This chain is Lipoate-protein ligase A, found in Escherichia coli O8 (strain IAI1).